We begin with the raw amino-acid sequence, 370 residues long: Pantothenate kinase 3 (370 aa).

Glu138 acts as the Proton acceptor in catalysis. Ser192, Ser195, and Arg207 together coordinate acetyl-CoA.

The protein belongs to the type II pantothenate kinase family. Homodimer. As to expression, highly expressed in the liver.

Its subcellular location is the cytoplasm. The catalysed reaction is (R)-pantothenate + ATP = (R)-4'-phosphopantothenate + ADP + H(+). It functions in the pathway cofactor biosynthesis; coenzyme A biosynthesis; CoA from (R)-pantothenate: step 1/5. With respect to regulation, subject to allosteric regulation, exists in two distinct conformational states, a catalytically incompetent (or open) conformation stabilized by the binding of acetyl(acyl)-CoA, and a catalytically competent (or closed) conformation stabilized by ATP-binding. Acetyl-CoA and its thioesters act as allosteric inhibitors and compete with the ATP-binding site. Strongly inhibited by acetyl-CoA, malonyl-CoA and palmitoyl CoA and modestly inhibited by CoA. Inhibited by calcium hopantenate. Functionally, catalyzes the phosphorylation of pantothenate to generate 4'-phosphopantothenate in the first and rate-determining step of coenzyme A (CoA) synthesis. The protein is Pantothenate kinase 3 (Pank3) of Mus musculus (Mouse).